A 556-amino-acid polypeptide reads, in one-letter code: Formate--tetrahydrofolate ligase (556 aa).

An ATP-binding site is contributed by 65-72; sequence TPAGEGKS.

This sequence belongs to the formate--tetrahydrofolate ligase family.

It catalyses the reaction (6S)-5,6,7,8-tetrahydrofolate + formate + ATP = (6R)-10-formyltetrahydrofolate + ADP + phosphate. The protein operates within one-carbon metabolism; tetrahydrofolate interconversion. The chain is Formate--tetrahydrofolate ligase from Streptococcus uberis (strain ATCC BAA-854 / 0140J).